The sequence spans 777 residues: Semaphorin-4F (777 aa).

The signal sequence occupies residues 1 to 40 (MLARAERPRPGPRPPPVSLFPPPSSLLLLLLAMLSAPVCG). The Extracellular segment spans residues 41–667 (RVPRSVPRTS…PANRAHTVVG (627 aa)). In terms of domain architecture, Sema spans 48-516 (RTSLPISEAD…SHTEVTQVNT (469 aa)). A glycan (N-linked (GlcNAc...) asparagine) is linked at Asn70. Cys118 and Cys128 are disulfide-bonded. N-linked (GlcNAc...) asparagine glycosylation occurs at Asn139. 3 cysteine pairs are disulfide-bonded: Cys146–Cys155, Cys279–Cys390, and Cys303–Cys349. N-linked (GlcNAc...) asparagine glycosylation occurs at Asn515. The region spanning 518-569 (NCGRLQSCSECILAQDPVCAWSFRLDACVAHAGEHRGMVQDIESADVSSLCP) is the PSI domain. Cystine bridges form between Cys519-Cys536, Cys528-Cys545, and Cys593-Cys634. The 56-residue stretch at 586 to 641 (VGHVVLPCSPSSAWASCVWHQPSGVTSLTPRRDGLEVVVTPGAMGAYACECQEGGA) folds into the Ig-like C2-type domain. The chain crosses the membrane as a helical span at residues 668–688 (AGLVGFFLGVLAASLTLLLIG). The Cytoplasmic portion of the chain corresponds to 689 to 777 (RRQQRRRQRE…PLATCDETSI (89 aa)). Residues 703–742 (DKVGLDLGAPPSGTTSYSQDPPSPSPEDERLPLALGKRGS) form a disordered region. Phosphoserine is present on residues Ser725 and Ser727. Positions 775–777 (TSI) match the PDZ-binding motif.

The protein belongs to the semaphorin family. In terms of assembly, interacts (via PDZ-binding motif) with DLG4/SAP90 (via PDZ domain 2); this interaction may promote translocation of DLG4/SAP90 to the membrane. In terms of tissue distribution, expressed throughout the adult brain, where it shows particularly strong expression in the hippocampus, corpus callosum, granular layer and deep nuclei of the cerebellum, and the mitral layer of the olfactory bulb (at protein level). At the cellular level, detected in neuronal precursors, postmitotic neurons, pyramidal neurons, and glial cells including mature oligodendocytes and oligodendroglial precursor cells (at protein level).

Its subcellular location is the cell membrane. It localises to the postsynaptic density. It is found in the perikaryon. The protein localises to the cell projection. The protein resides in the dendrite. Functionally, probable cell surface receptor that regulates oligodendroglial precursor cell migration. Might also regulate differentiation of oligodendroglial precursor cells. Has growth cone collapse activity against retinal ganglion-cell axons. The polypeptide is Semaphorin-4F (Sema4f) (Mus musculus (Mouse)).